A 557-amino-acid chain; its full sequence is Anti-Muellerian hormone type-2 receptor (557 aa).

Positions 1–17 (MLGTLGLWTLLPAAAQV) are cleaved as a signal peptide. Over 18–144 (SPNRRTCVFF…QEPQATPGGP (127 aa)) the chain is Extracellular. Cystine bridges form between C55–C79 and C92–C109. The N-linked (GlcNAc...) asparagine glycan is linked to N66. An N-linked (GlcNAc...) asparagine glycan is attached at N119. The helical transmembrane segment at 145–165 (IWMAQLLLGVFLVLLLSIIIL) threads the bilayer. The Cytoplasmic portion of the chain corresponds to 166–557 (ALLQRKACRV…SVQQGSGSKS (392 aa)). One can recognise a Protein kinase domain in the interval 201–511 (LRFSQVIQEG…RLAALAYPQV (311 aa)). ATP-binding positions include 207–215 (IQEGGHAVV) and K228. The active-site Proton acceptor is D331.

This sequence belongs to the protein kinase superfamily. TKL Ser/Thr protein kinase family. TGFB receptor subfamily. In terms of assembly, interacts with type I receptor ACVR1. Requires Mg(2+) as cofactor. It depends on Mn(2+) as a cofactor.

The protein resides in the membrane. The catalysed reaction is L-threonyl-[receptor-protein] + ATP = O-phospho-L-threonyl-[receptor-protein] + ADP + H(+). It catalyses the reaction L-seryl-[receptor-protein] + ATP = O-phospho-L-seryl-[receptor-protein] + ADP + H(+). On ligand binding, forms a receptor complex consisting of two type II and two type I transmembrane serine/threonine kinases. Type II receptors phosphorylate and activate type I receptors which autophosphorylate, then bind and activate SMAD transcriptional regulators. Receptor for anti-Muellerian hormone. This chain is Anti-Muellerian hormone type-2 receptor (Amhr2), found in Rattus norvegicus (Rat).